The sequence spans 571 residues: 2-succinyl-5-enolpyruvyl-6-hydroxy-3-cyclohexene-1-carboxylate synthase (571 aa).

This sequence belongs to the TPP enzyme family. MenD subfamily. Homodimer. Mg(2+) serves as cofactor. The cofactor is Mn(2+). It depends on thiamine diphosphate as a cofactor.

It catalyses the reaction isochorismate + 2-oxoglutarate + H(+) = 5-enolpyruvoyl-6-hydroxy-2-succinyl-cyclohex-3-ene-1-carboxylate + CO2. It functions in the pathway quinol/quinone metabolism; 1,4-dihydroxy-2-naphthoate biosynthesis; 1,4-dihydroxy-2-naphthoate from chorismate: step 2/7. It participates in quinol/quinone metabolism; menaquinone biosynthesis. In terms of biological role, catalyzes the thiamine diphosphate-dependent decarboxylation of 2-oxoglutarate and the subsequent addition of the resulting succinic semialdehyde-thiamine pyrophosphate anion to isochorismate to yield 2-succinyl-5-enolpyruvyl-6-hydroxy-3-cyclohexene-1-carboxylate (SEPHCHC). The protein is 2-succinyl-5-enolpyruvyl-6-hydroxy-3-cyclohexene-1-carboxylate synthase of Vibrio parahaemolyticus serotype O3:K6 (strain RIMD 2210633).